Reading from the N-terminus, the 325-residue chain is MTASQPLDQADQDSESSSAGSSAAETEHVSVMPNEIVQWVREINPTTIIDGTYGGGGHTRLLAEVLADAGSDSDTPRVIAIDRDPAVVRRDEQKSWIKDDPRIELFLGSYESSPKALDALDLTHADALVLDLGLSSDQLADRNRGFTFTIDDAELDLRFDPENGVPAHRWLQQHSEKEIADAIYRFGEERFSRRIAKQIFLRARERNPVTKVGELVEICRRCVPRSRNHDIHPATRTFQALRIAVNDELGGLTRTLQSAPDWIAPGGRVAVISFHSLEDRIVKNAFREDHRWEILTKKPLRPTDEEVQANPRSRSAKLRVAKRVE.

Positions 1–28 are disordered; the sequence is MTASQPLDQADQDSESSSAGSSAAETEH. Positions 15–24 are enriched in low complexity; sequence ESSSAGSSAA. S-adenosyl-L-methionine-binding positions include 56–58, Asp-82, Tyr-110, Asp-131, and Gln-138; that span reads GGH. Residues 303-325 form a disordered region; that stretch reads TDEEVQANPRSRSAKLRVAKRVE. Residues 314-325 show a composition bias toward basic residues; it reads RSAKLRVAKRVE.

The protein belongs to the methyltransferase superfamily. RsmH family.

It is found in the cytoplasm. The catalysed reaction is cytidine(1402) in 16S rRNA + S-adenosyl-L-methionine = N(4)-methylcytidine(1402) in 16S rRNA + S-adenosyl-L-homocysteine + H(+). Its function is as follows. Specifically methylates the N4 position of cytidine in position 1402 (C1402) of 16S rRNA. The polypeptide is Ribosomal RNA small subunit methyltransferase H (Rhodopirellula baltica (strain DSM 10527 / NCIMB 13988 / SH1)).